A 992-amino-acid chain; its full sequence is UPF0182 protein Mb3215c (992 aa).

7 consecutive transmembrane segments (helical) span residues 17–39, 59–81, 113–135, 169–191, 212–229, 255–277, and 284–306; these read RILI…LIDA, LATR…FGGL, LVGI…SYWA, LMLS…AHYI, LVSL…AYWL, VLPA…FSAI, and IPAI…WPLI. Positions 906–938 are disordered; it reads PTEAAVPPSPAANPPPPASGPQPPPVTAAPPVP. Residues 912–938 show a composition bias toward pro residues; the sequence is PPSPAANPPPPASGPQPPPVTAAPPVP.

Belongs to the UPF0182 family.

Its subcellular location is the cell membrane. The polypeptide is UPF0182 protein Mb3215c (Mycobacterium bovis (strain ATCC BAA-935 / AF2122/97)).